Consider the following 484-residue polypeptide: MILNYIKKAKAAQQAIDHYTQEEIDKVCIAVGWEVYNDENILKLATSAVEETGMGNIPDKVAKHKNKVLGVLKDLKDAKSVGLIEEDFDKKIKKYAKPVGVVGALTPVTNPTATPASNGITILKGKNAVIFAPHPKAKLSTKMAVDFMREGLRKVGAPLDLIQVIEEPSLELTGELMKQVNVVLATGGGPMVKAAYSSGTPAYGVGPGNSVQIIAEDCDVLDAAKKVFTSKSFDHATSCSSENSVIVHESIYDRFVGELIRLGSYFVKNERKVLEEYMWIQNAKGYRSINPAIIAQSAKTIADSAGIKVSEEIKVLLVEGASDIEKDFFSQEKLSPVLTVFTYREFEEGYKILERLTNNYGTGHSCGIHTFNQEYIEKIGSRMKTSRVMVNQAQAAGNGGAFFNGMPSTVSLGCGSWGGNITSENITFKHFINVTWVSEYFTPKRPSDEEIFGDYLREVKAWSSTSIRQKQSLVNIRSPHQRVS.

NAD(+) is bound by residues 105 to 110, glycine 188, and glycine 206; that span reads LTPVTN. The active-site Nucleophile is cysteine 239. NAD(+) contacts are provided by glutamate 332 and leucine 412.

Belongs to the aldehyde dehydrogenase family.

The enzyme catalyses sulfoacetaldehyde + NAD(+) + CoA = sulfoacetyl-CoA + NADH + H(+). In terms of biological role, part of a variant of the sulfo-TK pathway, a D-sulfoquinovose degradation pathway that produces sulfoacetate. Catalyzes the oxidation of sulfoacetaldehyde (SA) to sulfoacetyl-coenzyme A (sulfoacetyl-CoA). Is highly specific for NAD(+), with only residual (1%) activity with NADP(+). Cannot use acetaldehyde. The chain is Sulfoacetaldehyde dehydrogenase from Acholeplasma sp.